The chain runs to 162 residues: Regulator of ribonuclease activity A (162 aa).

It belongs to the RraA family. As to quaternary structure, homotrimer. Binds to both RNA-binding sites in the C-terminal region of Rne and to RhlB.

The protein localises to the cytoplasm. In terms of biological role, globally modulates RNA abundance by binding to RNase E (Rne) and regulating its endonucleolytic activity. Can modulate Rne action in a substrate-dependent manner by altering the composition of the degradosome. Modulates RNA-binding and helicase activities of the degradosome. This is Regulator of ribonuclease activity A from Haemophilus influenzae (strain ATCC 51907 / DSM 11121 / KW20 / Rd).